We begin with the raw amino-acid sequence, 38 residues long: Large ribosomal subunit protein bL36 (38 aa).

The protein belongs to the bacterial ribosomal protein bL36 family.

The protein is Large ribosomal subunit protein bL36 of Azotobacter vinelandii (strain DJ / ATCC BAA-1303).